A 491-amino-acid chain; its full sequence is Keratin, type I cytoskeletal 39 (491 aa).

The interval 1–96 (MDTKGCTTTN…WYGEGINSNE (96 aa)) is head. The region spanning 96 to 407 (EKETMQILNE…SLLESSDGKR (312 aa)) is the IF rod domain. Residues 97-131 (KETMQILNERLANYLQKVRMLERENAELESKIQEE) form a coil 1A region. Residues 132–142 (SNKELPVLCPD) are linker 1. The interval 143-243 (YLSYYTTIEE…HKEEINSLQC (101 aa)) is coil 1B. A linker 12 region spans residues 244–259 (QLGERLDIEVTAAPSA). The tract at residues 260–403 (DLNQVLQEMR…TTYRSLLESS (144 aa)) is coil 2. A tail region spans residues 404–491 (DGKRPCYPRA…PCFIIRPAKV (88 aa)).

It belongs to the intermediate filament family. As to quaternary structure, heterotetramer of two type I and two type II keratins. Expressed in skin and scalp. In the hair follicle, it is present in the upper hair cuticle and the upper cortex. Also present in the in the upper portion of beard hairs (at protein level).

Functionally, may play a role in late hair differentiation. This is Keratin, type I cytoskeletal 39 (KRT39) from Homo sapiens (Human).